The following is a 273-amino-acid chain: Spore development regulator vosA (273 aa).

The segment covering 66–75 (STTQELQSTQ) has biased composition (low complexity). The tract at residues 66 to 86 (STTQELQSTQPIAVRQQPRAA) is disordered. A Velvet domain is found at 70–253 (ELQSTQPIAV…KEQGCIISIK (184 aa)). The short motif at 211–218 (FPTLTEIK) is the Nuclear localization signal element. Residues 254-267 (KGNERARPRGADGR) show a composition bias toward basic and acidic residues. The interval 254–273 (KGNERARPRGADGRSDDEDD) is disordered.

This sequence belongs to the velvet family. VosA subfamily. As to quaternary structure, forms a heterodimeric complex with velB; the formation of the velB-vosA complex is light-dependent.

The protein resides in the nucleus. Component of the velB-vosA heterodimeric complex that plays a dual role in activating genes associated with spore maturation and repressing certain development-associated genes. The complex binds DNA through the DNA-binding domain of vosA that recognizes an 11-nucleotide consensus sequence 5'-CTGGCCGCGGC-3' consisting of two motifs in the promoters of key developmental regulatory genes. Positively regulates the expression of wetA and represses abaA and brlA. Acts as a crucial regulator of both conidiation capacity and conidial quality. Responsible for the synthesis and accumulation of intracellular trehalose. The chain is Spore development regulator vosA from Beauveria bassiana (strain ARSEF 2860) (White muscardine disease fungus).